A 205-amino-acid chain; its full sequence is Cyanate hydratase (205 aa).

Catalysis depends on residues R133, E136, and S159.

Belongs to the cyanase family.

The enzyme catalyses cyanate + hydrogencarbonate + 3 H(+) = NH4(+) + 2 CO2. Catalyzes the reaction of cyanate with bicarbonate to produce ammonia and carbon dioxide. The sequence is that of Cyanate hydratase from Thalassiosira pseudonana (Marine diatom).